Here is a 123-residue protein sequence, read N- to C-terminus: Large ribosomal subunit protein uL18 (123 aa).

Belongs to the universal ribosomal protein uL18 family. In terms of assembly, part of the 50S ribosomal subunit; part of the 5S rRNA/L5/L18/L25 subcomplex. Contacts the 5S and 23S rRNAs.

In terms of biological role, this is one of the proteins that bind and probably mediate the attachment of the 5S RNA into the large ribosomal subunit, where it forms part of the central protuberance. In Bifidobacterium longum (strain DJO10A), this protein is Large ribosomal subunit protein uL18.